The primary structure comprises 264 residues: Thymidylate synthase (264 aa).

A dUMP-binding site is contributed by arginine 21. Residue histidine 51 coordinates (6R)-5,10-methylene-5,6,7,8-tetrahydrofolate. 126-127 (RR) is a dUMP binding site. Cysteine 146 serves as the catalytic Nucleophile. Residues 166 to 169 (RSCD), asparagine 177, and 207 to 209 (HLY) contribute to the dUMP site. Aspartate 169 is a binding site for (6R)-5,10-methylene-5,6,7,8-tetrahydrofolate. Alanine 263 is a binding site for (6R)-5,10-methylene-5,6,7,8-tetrahydrofolate.

This sequence belongs to the thymidylate synthase family. Bacterial-type ThyA subfamily. Homodimer.

The protein resides in the cytoplasm. The enzyme catalyses dUMP + (6R)-5,10-methylene-5,6,7,8-tetrahydrofolate = 7,8-dihydrofolate + dTMP. Its pathway is pyrimidine metabolism; dTTP biosynthesis. In terms of biological role, catalyzes the reductive methylation of 2'-deoxyuridine-5'-monophosphate (dUMP) to 2'-deoxythymidine-5'-monophosphate (dTMP) while utilizing 5,10-methylenetetrahydrofolate (mTHF) as the methyl donor and reductant in the reaction, yielding dihydrofolate (DHF) as a by-product. This enzymatic reaction provides an intracellular de novo source of dTMP, an essential precursor for DNA biosynthesis. In Escherichia coli (strain 55989 / EAEC), this protein is Thymidylate synthase.